Reading from the N-terminus, the 477-residue chain is Glutamate--tRNA ligase (477 aa).

The short motif at 18-28 is the 'HIGH' region element; it reads PSPTGFIHLGN. A compositionally biased stretch (basic and acidic residues) spans 128-138; it reads PRYDGSWRPEP. Residues 128–151 are disordered; sequence PRYDGSWRPEPGKTLPPVPAGMSP. The 'KMSKS' region motif lies at 250 to 254; the sequence is KLSKR. K253 contacts ATP.

The protein belongs to the class-I aminoacyl-tRNA synthetase family. Glutamate--tRNA ligase type 1 subfamily. In terms of assembly, monomer.

Its subcellular location is the cytoplasm. It carries out the reaction tRNA(Glu) + L-glutamate + ATP = L-glutamyl-tRNA(Glu) + AMP + diphosphate. Its function is as follows. Catalyzes the attachment of glutamate to tRNA(Glu) in a two-step reaction: glutamate is first activated by ATP to form Glu-AMP and then transferred to the acceptor end of tRNA(Glu). This is Glutamate--tRNA ligase from Verminephrobacter eiseniae (strain EF01-2).